The sequence spans 100 residues: Large ribosomal subunit protein uL23 (100 aa).

The protein belongs to the universal ribosomal protein uL23 family. As to quaternary structure, part of the 50S ribosomal subunit. Contacts protein L29, and trigger factor when it is bound to the ribosome.

One of the early assembly proteins it binds 23S rRNA. One of the proteins that surrounds the polypeptide exit tunnel on the outside of the ribosome. Forms the main docking site for trigger factor binding to the ribosome. This chain is Large ribosomal subunit protein uL23, found in Rippkaea orientalis (strain PCC 8801 / RF-1) (Cyanothece sp. (strain PCC 8801)).